Consider the following 473-residue polypeptide: SHC-transforming protein 1 (473 aa).

The interval 1–26 is disordered; sequence MNKLSGGGGRRTRVEGGQLGGEEWTR. The residue at position 29 (serine 29) is a Phosphoserine. Position 44 is an N6-acetyllysine (lysine 44). Residues 46–229 form the PID domain; the sequence is MGPGVSYLVR…AGFDGSAWDE (184 aa). Positions 216 to 314 are disordered; sequence HDRMAGFDGS…PSSGRELFDD (99 aa). A CH1 region spans residues 230 to 377; the sequence is EEEEPPDHQY…AMAEQLRGEP (148 aa). Phosphotyrosine occurs at positions 239, 240, and 317. The tract at residues 328–348 is disordered; that stretch reads QAGAGAGPPNPTINGSAPRDL. At serine 343 the chain carries Phosphoserine. Residues 378–469 form the SH2 domain; that stretch reads WFHGKLSRRE…GSELCLQQPV (92 aa).

As to quaternary structure, interacts with CPNE3; this interaction may mediate the binding of CPNE3 with ERBB2. Interacts with the Trk receptors NTRK1, NTRK2 and NTRK3; in a phosphotyrosine-dependent manner. Interacts with the NPXY motif of tyrosine-phosphorylated IGF1R and INSR in vitro via the PID domain. Once activated, binds to GRB2. Interacts with tyrosine-phosphorylated CD3T and DDR2. Interacts with the N-terminal region of APS. Interacts with phosphorylated LRP1 and IRS4. Interacts with INPP5D/SHIP1 and INPPL1/SHIP2. Interacts with ALK, GAB2, GRB7 and KIT. Interacts with PTPN6/SHP (tyrosine phosphorylated). Identified in a complex containing FGFR4, NCAM1, CDH2, PLCG1, FRS2, SRC, SHC1, GAP43 and CTTN. Interacts with FLT4 (tyrosine-phosphorylated). Interacts with EPHB1 and GRB2; activates the MAPK/ERK cascade to regulate cell migration. Interacts with PDGFRB (tyrosine-phosphorylated). Interacts with ERBB4. Interacts with TEK/TIE2 (tyrosine-phosphorylated). Interacts with PTK2/FAK1. Interacts with CEACAM1; this interaction is CEACAM1-phosphorylation-dependent and mediates interaction with EGFR or INSR resulting in decrease coupling of SHC1 to the MAPK3/ERK1-MAPK1/ERK2 pathway. Interacts (via PID domain) with PEAK1 (when phosphorylated). Found in a complex with PPP1CA, PPP1CC, SHC1 and PEAK1. Phosphorylated by activated epidermal growth factor receptor. Phosphorylated in response to KIT signaling. Tyrosine phosphorylated in response to FLT3 and FLT4 signaling and by ligand-activated ALK. Tyrosine phosphorylated by ligand-activated PDGFRB. Tyrosine phosphorylated by TEK/TIE2. May be tyrosine phosphorylated by activated PTK2/FAK1. Tyrosine phosphorylated by activated PTK2B/PYK2. Dephosphorylation by PTPN2 may regulate interaction with GRB2.

It localises to the cytoplasm. The protein localises to the cell junction. The protein resides in the focal adhesion. In terms of biological role, signaling adapter that couples activated growth factor receptors to signaling pathways. Participates in a signaling cascade initiated by activated KIT and KITLG/SCF. Participates in signaling downstream of the angiopoietin receptor TEK/TIE2, and plays a role in the regulation of endothelial cell migration and sprouting angiogenesis. In Bos taurus (Bovine), this protein is SHC-transforming protein 1 (SHC1).